The following is a 108-amino-acid chain: Thiosulfate sulfurtransferase GlpE (108 aa).

Positions 17–105 (QEKEAVLVDI…WQRQFPAEVA (89 aa)) constitute a Rhodanese domain. Cys-65 serves as the catalytic Cysteine persulfide intermediate.

Belongs to the GlpE family.

It is found in the cytoplasm. It catalyses the reaction thiosulfate + hydrogen cyanide = thiocyanate + sulfite + 2 H(+). The enzyme catalyses thiosulfate + [thioredoxin]-dithiol = [thioredoxin]-disulfide + hydrogen sulfide + sulfite + 2 H(+). In terms of biological role, transferase that catalyzes the transfer of sulfur from thiosulfate to thiophilic acceptors such as cyanide or dithiols. May function in a CysM-independent thiosulfate assimilation pathway by catalyzing the conversion of thiosulfate to sulfite, which can then be used for L-cysteine biosynthesis. This chain is Thiosulfate sulfurtransferase GlpE, found in Escherichia coli O45:K1 (strain S88 / ExPEC).